Here is a 100-residue protein sequence, read N- to C-terminus: MANVVDPRDIILSPVISEKSYGLIEDNVYTFIVHPDSNKTQIKIAIEKIFKVKVDSVNTANRPGKRKRTRTGYGQRKATKRAIVTLAAGSKPIDLFGAPA.

This sequence belongs to the universal ribosomal protein uL23 family. In terms of assembly, part of the 50S ribosomal subunit. Contacts protein L29, and trigger factor when it is bound to the ribosome.

In terms of biological role, one of the early assembly proteins it binds 23S rRNA. One of the proteins that surrounds the polypeptide exit tunnel on the outside of the ribosome. Forms the main docking site for trigger factor binding to the ribosome. This is Large ribosomal subunit protein uL23 from Mycolicibacterium gilvum (strain PYR-GCK) (Mycobacterium gilvum (strain PYR-GCK)).